A 442-amino-acid chain; its full sequence is Histidine--tRNA ligase (442 aa).

Belongs to the class-II aminoacyl-tRNA synthetase family. In terms of assembly, homodimer.

It is found in the cytoplasm. It carries out the reaction tRNA(His) + L-histidine + ATP = L-histidyl-tRNA(His) + AMP + diphosphate + H(+). This Helicobacter hepaticus (strain ATCC 51449 / 3B1) protein is Histidine--tRNA ligase.